A 582-amino-acid polypeptide reads, in one-letter code: Protein alan shepard (582 aa).

Positions Met1–Gln12 are enriched in pro residues. A disordered region spans residues Met1–Phe73. Tyr5 carries the post-translational modification Phosphotyrosine. Residues Gln13–Gln24 are compositionally biased toward low complexity. The span at Gln25–Met35 shows a compositional bias: gly residues. Over residues Gly37–Gly57 the composition is skewed to polar residues. Positions Ser58 to Ala72 are enriched in low complexity. Phosphotyrosine is present on residues Tyr125 and Tyr142. Positions Pro164 to Gly225 are disordered. Over residues Ser178–Gly225 the composition is skewed to low complexity. 2 consecutive RRM domains span residues Thr231–Gln304 and Thr310–Gly389. Residues Pro555–Lys582 form a disordered region.

Functionally, has a role in the perception of gravity. The polypeptide is Protein alan shepard (Drosophila erecta (Fruit fly)).